The sequence spans 344 residues: N-acetyl-gamma-glutamyl-phosphate reductase (344 aa).

Residue Cys-150 is part of the active site.

This sequence belongs to the NAGSA dehydrogenase family. Type 1 subfamily.

It localises to the cytoplasm. It carries out the reaction N-acetyl-L-glutamate 5-semialdehyde + phosphate + NADP(+) = N-acetyl-L-glutamyl 5-phosphate + NADPH + H(+). It functions in the pathway amino-acid biosynthesis; L-arginine biosynthesis; N(2)-acetyl-L-ornithine from L-glutamate: step 3/4. Catalyzes the NADPH-dependent reduction of N-acetyl-5-glutamyl phosphate to yield N-acetyl-L-glutamate 5-semialdehyde. The protein is N-acetyl-gamma-glutamyl-phosphate reductase of Pseudomonas syringae pv. syringae (strain B728a).